The chain runs to 257 residues: MARVVVITGGGTGIGAACARLMHPAGERVFITGRRDAVRAVANETGATALVAMPPTARCGASGCCRRSSTRPAGLMSSSAAPAGWATAPPPRPATANEREALDGNLTSAFASVRACLPSLIARRGNVLFVASIASLAAGPQACGYVTAKHALIGLMRSVARDYGPQGVRANAICPGWVTTPMADEEMHPLMQAEGLSLTEAYQRVCRDVPLRRPASPEEIAQACQFLCSPQAAIISGATLVADGGASIVDVPTLAFA.

6–29 is an NAD(+) binding site; that stretch reads VITGGGTGIGAACARLMHPAGERV. The segment at 75 to 96 is disordered; sequence LMSSSAAPAGWATAPPPRPATA. Residue serine 132 participates in substrate binding. Tyrosine 145 serves as the catalytic Proton acceptor.

This sequence belongs to the short-chain dehydrogenases/reductases (SDR) family.

Functionally, might catalyze the conversion of monoamine compounds or their metabolites. The chain is Protein MoaE (moaE) from Klebsiella aerogenes (Enterobacter aerogenes).